Here is a 304-residue protein sequence, read N- to C-terminus: D-alanine--D-alanine ligase (304 aa).

Residues 101 to 298 form the ATP-grasp domain; that stretch reads KKIFIKNKIL…FIKLIEWILK (198 aa). Residue 131-184 coordinates ATP; that stretch reads EKNLKFPVVVKPINEGSSVHVYICDKTNILKNLKVLKSYNEILIEEFIPGREIQ. Mg(2+)-binding residues include Asp253, Glu265, and Asn267.

This sequence belongs to the D-alanine--D-alanine ligase family. Mg(2+) is required as a cofactor. It depends on Mn(2+) as a cofactor.

The protein localises to the cytoplasm. It catalyses the reaction 2 D-alanine + ATP = D-alanyl-D-alanine + ADP + phosphate + H(+). It functions in the pathway cell wall biogenesis; peptidoglycan biosynthesis. Its function is as follows. Cell wall formation. The polypeptide is D-alanine--D-alanine ligase (Pelagibacter ubique (strain HTCC1062)).